Here is a 189-residue protein sequence, read N- to C-terminus: MKMLVDFLPIALFFAVYHLSDDILLATLVLIPATLAQVAFVWWRYRRVEKMQLITLALVVVMGGATVIFHDAAFIQWKPTVVNWLFAFAFLVAPLFGGKTLIERMMGKAIALPAATWRRLNLAWVAFFIALGAINVYVFKTYDEATWVNFKLFGMLGLTLLFVLGQGVYLARHMPRDTLSQNDHQKDDV.

The next 5 membrane-spanning stretches (helical) occupy residues 23–43 (ILLA…FVWW), 54–74 (ITLA…DAAF), 82–102 (VNWL…KTLI), 120–140 (LNLA…YVFK), and 150–170 (FKLF…GVYL).

This sequence belongs to the YciB family.

The protein localises to the cell inner membrane. Functionally, plays a role in cell envelope biogenesis, maintenance of cell envelope integrity and membrane homeostasis. This is Inner membrane-spanning protein YciB from Chromohalobacter salexigens (strain ATCC BAA-138 / DSM 3043 / CIP 106854 / NCIMB 13768 / 1H11).